The primary structure comprises 281 residues: Undecaprenyl-diphosphatase 1 (281 aa).

A run of 6 helical transmembrane segments spans residues 95–115 (WMVIAGTIPVGLAGVLLKDLI), 119–139 (FRNLWITATVLILFSLVFILA), 152–172 (LTMKDAVLMGLWQCLALIPGV), 195–215 (FSFLLAIPAVLASGLFSLPDA), 227–247 (LQLLVGSGIGFVVGYISIAWL), and 256–276 (FAWFAAYRIPLGLLVMALLGT).

It belongs to the UppP family.

It localises to the cell membrane. It carries out the reaction di-trans,octa-cis-undecaprenyl diphosphate + H2O = di-trans,octa-cis-undecaprenyl phosphate + phosphate + H(+). Functionally, catalyzes the dephosphorylation of undecaprenyl diphosphate (UPP). Confers resistance to bacitracin. In Corynebacterium jeikeium (strain K411), this protein is Undecaprenyl-diphosphatase 1.